The chain runs to 566 residues: MEKYFPKYVPFFSLLALSGLLYLLWSITSLESWNCQTVSTFYQLQNSIQSVLKTSELLLPTEFNYSFCAHLGQEPTLEEAREESYLLKSIAWPEPSTLGLPLRQSSDPAQSYYTIQDTGDLRVGGQLAVKVHMHNFLGQPKKHGGDFLVARLHTPELVAGVAGQVRDHNNGNYTIFFPLLWAGVAQVELTMIHSSEAVMVLKRLREEQSDRVFFKSLFRSGYISESTLCNPCLPLKPQPLCNYTDPQTGEPWYCYKPKMLDCDTRIDHSKGGYKKNLLTVYESQFFQSGVNIKVPIHSAGVDNVTVLPASKVRTKKMRLEFTPSGYYYQGSWRPLSGVVPRQFNTSSLINQCLRGKMLYMYGDSTVRQWYEYLITNVPEFKEFNFHSAKNVGPYMGVNMNYNALLKYRCHGPPIRFTSVSSAEMRYISNELDGLSGGSDTVVVISIWSHFSTYPVPVYIRRLRHIRKAVIRLLNREPTTLVFIRTGNLQKLDAESSLFNSDWFSQQLDTVLRAMFKGLNVQLVDAWEMTLAHHHPHQLHPQLDIVSNMVNFILSHICPVRKKKKRG.

The signal sequence occupies residues methionine 1 to serine 32. N-linked (GlcNAc...) asparagine glycosylation is found at asparagine 64, asparagine 172, asparagine 242, asparagine 303, and asparagine 344.

This sequence belongs to the NXPE family.

It is found in the secreted. The chain is NXPE family member 3 (nxpe3) from Danio rerio (Zebrafish).